A 72-amino-acid chain; its full sequence is Large ribosomal subunit protein bL32 (72 aa).

This sequence belongs to the bacterial ribosomal protein bL32 family.

This chain is Large ribosomal subunit protein bL32, found in Dehalococcoides mccartyi (strain ATCC BAA-2100 / JCM 16839 / KCTC 5957 / BAV1).